The following is an 874-amino-acid chain: Bifunctional uridylyltransferase/uridylyl-removing enzyme (874 aa).

The interval 1 to 332 (MPLQSPLTFS…NGGATENAEI (332 aa)) is uridylyltransferase. Residues 333 to 692 (LDADFQRRGS…ISKKATRGGT (360 aa)) are uridylyl-removing. Positions 451–573 (VDEHSIRLLK…VRDEESLEYL (123 aa)) constitute an HD domain. ACT domains lie at 693 to 777 (EVFV…RTPN) and 800 to 874 (LMEF…AVTA).

Belongs to the GlnD family. It depends on Mg(2+) as a cofactor.

The enzyme catalyses [protein-PII]-L-tyrosine + UTP = [protein-PII]-uridylyl-L-tyrosine + diphosphate. It carries out the reaction [protein-PII]-uridylyl-L-tyrosine + H2O = [protein-PII]-L-tyrosine + UMP + H(+). Uridylyltransferase (UTase) activity is inhibited by glutamine, while glutamine activates uridylyl-removing (UR) activity. Functionally, modifies, by uridylylation and deuridylylation, the PII regulatory proteins (GlnB and homologs), in response to the nitrogen status of the cell that GlnD senses through the glutamine level. Under low glutamine levels, catalyzes the conversion of the PII proteins and UTP to PII-UMP and PPi, while under higher glutamine levels, GlnD hydrolyzes PII-UMP to PII and UMP (deuridylylation). Thus, controls uridylylation state and activity of the PII proteins, and plays an important role in the regulation of nitrogen assimilation and metabolism. The polypeptide is Bifunctional uridylyltransferase/uridylyl-removing enzyme (Vibrio parahaemolyticus serotype O3:K6 (strain RIMD 2210633)).